The chain runs to 968 residues: RNA polymerase-associated protein RapA (968 aa).

In terms of domain architecture, Helicase ATP-binding spans Asp-164–Asn-334. Asp-177–Thr-184 is an ATP binding site. The short motif at Asp-280 to His-283 is the DEAH box element. The Helicase C-terminal domain occupies Arg-490–Gly-662.

Belongs to the SNF2/RAD54 helicase family. RapA subfamily. Interacts with the RNAP. Has a higher affinity for the core RNAP than for the holoenzyme. Its ATPase activity is stimulated by binding to RNAP.

Functionally, transcription regulator that activates transcription by stimulating RNA polymerase (RNAP) recycling in case of stress conditions such as supercoiled DNA or high salt concentrations. Probably acts by releasing the RNAP, when it is trapped or immobilized on tightly supercoiled DNA. Does not activate transcription on linear DNA. Probably not involved in DNA repair. This Cronobacter sakazakii (strain ATCC BAA-894) (Enterobacter sakazakii) protein is RNA polymerase-associated protein RapA.